A 338-amino-acid chain; its full sequence is DNA-directed RNA polymerase I subunit RPA43 (338 aa).

The disordered stretch occupies residues 209–338 (EVSEEVTENG…PKRKGKSNFL (130 aa)). 3 positions are modified to phosphoserine: serine 242, serine 304, and serine 316. At threonine 322 the chain carries Phosphothreonine. Serine 328 bears the Phosphoserine mark. A compositionally biased stretch (basic residues) spans 328 to 338 (SPKRKGKSNFL).

The protein belongs to the eukaryotic RPA43 RNA polymerase subunit family. Component of the RNA polymerase I (Pol I) complex consisting of 13 subunits: a ten-subunit catalytic core composed of POLR1A/RPA1, POLR1B/RPA2, POLR1C/RPAC1, POLR1D/RPAC2, POLR1H/RPA12, POLR2E/RPABC1, POLR2F/RPABC2, POLR2H/RPABC3, POLR2K/RPABC4 and POLR2L/RPABC5; a mobile stalk subunit POLR1F/RPA43 protruding from the core and additional subunits homologous to general transcription factors POLR1E/RPA49 and POLR1G/RPA34. Interacts with RRN3/TIF-IA. As to expression, widely expressed. Expressed in all fetal and adult tissues tested, with highest expression in fetal lung, liver, and kidney, and low expression in all adult tissues.

The protein resides in the nucleus. It localises to the nucleolus. Its function is as follows. Component of RNA polymerase I (Pol I), a DNA-dependent RNA polymerase which synthesizes ribosomal RNA precursors using the four ribonucleoside triphosphates as substrates. Through its association with RRN3/TIF-IA may be involved in recruitment of Pol I to rDNA promoters. The polypeptide is DNA-directed RNA polymerase I subunit RPA43 (Homo sapiens (Human)).